We begin with the raw amino-acid sequence, 432 residues long: 3-phosphoshikimate 1-carboxyvinyltransferase (432 aa).

3-phosphoshikimate contacts are provided by K22, S23, and R27. K22 contacts phosphoenolpyruvate. Phosphoenolpyruvate contacts are provided by G96 and R127. Residues S173, S174, Q175, S201, D316, N339, and K343 each contribute to the 3-phosphoshikimate site. Phosphoenolpyruvate is bound at residue Q175. The active-site Proton acceptor is the D316. R347, R391, and K416 together coordinate phosphoenolpyruvate.

Belongs to the EPSP synthase family. In terms of assembly, monomer.

The protein resides in the cytoplasm. The catalysed reaction is 3-phosphoshikimate + phosphoenolpyruvate = 5-O-(1-carboxyvinyl)-3-phosphoshikimate + phosphate. Its pathway is metabolic intermediate biosynthesis; chorismate biosynthesis; chorismate from D-erythrose 4-phosphate and phosphoenolpyruvate: step 6/7. Catalyzes the transfer of the enolpyruvyl moiety of phosphoenolpyruvate (PEP) to the 5-hydroxyl of shikimate-3-phosphate (S3P) to produce enolpyruvyl shikimate-3-phosphate and inorganic phosphate. The polypeptide is 3-phosphoshikimate 1-carboxyvinyltransferase (Actinobacillus pleuropneumoniae serotype 5b (strain L20)).